We begin with the raw amino-acid sequence, 41 residues long: Pi-stichotoxin-Hcr5c (41 aa).

Disulfide bonds link C4–C37, C6–C30, and C20–C38.

This sequence belongs to the sea anemone type 3 (BDS) potassium channel toxin family.

The protein resides in the secreted. Its subcellular location is the nematocyst. In terms of biological role, weakly and reversibly inhibits rat homomeric ASIC1 (isoform ASIC1a) (IC(50)=4.95 uM), and ASIC3 (IC(50)=17 uM). ASIC1a current inhibition and ASIC3 transient current inhibition are not complete, and reach a maximum of 70% inhibition and 80%, respectively. The polypeptide is Pi-stichotoxin-Hcr5c (Radianthus crispa (Leathery sea anemone)).